The sequence spans 387 residues: Monopolar spindle protein 2 (387 aa).

The stretch at 117 to 232 (MNLNSPSKFL…NSSRTSDPGS (116 aa)) forms a coiled coil. The tract at residues 216–235 (RQVEDNQNSSRTSDPGSPLV) is disordered. The span at 220-230 (DNQNSSRTSDP) shows a compositional bias: polar residues. A helical transmembrane segment spans residues 311–327 (IRIIVCFALLAGVLPYI).

The protein belongs to the MPS2 family. Interacts with BBP1, MPS3, and SPC24.

The protein localises to the nucleus membrane. It localises to the cytoplasm. It is found in the cytoskeleton. The protein resides in the microtubule organizing center. Its subcellular location is the spindle pole body. Component of the spindle pole body (SPB) required for insertion of the nascent SPB into the nuclear envelope and for the proper execution of spindle pole body (SPB) duplication. The polypeptide is Monopolar spindle protein 2 (MPS2) (Saccharomyces cerevisiae (strain ATCC 204508 / S288c) (Baker's yeast)).